Reading from the N-terminus, the 212-residue chain is Peptide methionine sulfoxide reductase MsrA (212 aa).

The active site involves C51.

This sequence belongs to the MsrA Met sulfoxide reductase family.

It catalyses the reaction L-methionyl-[protein] + [thioredoxin]-disulfide + H2O = L-methionyl-(S)-S-oxide-[protein] + [thioredoxin]-dithiol. It carries out the reaction [thioredoxin]-disulfide + L-methionine + H2O = L-methionine (S)-S-oxide + [thioredoxin]-dithiol. Has an important function as a repair enzyme for proteins that have been inactivated by oxidation. Catalyzes the reversible oxidation-reduction of methionine sulfoxide in proteins to methionine. The protein is Peptide methionine sulfoxide reductase MsrA of Vibrio parahaemolyticus serotype O3:K6 (strain RIMD 2210633).